A 360-amino-acid polypeptide reads, in one-letter code: UDP-D-xylose:L-fucose alpha-1,3-D-xylosyltransferase MGP4 (360 aa).

Residues 1 to 25 (MAQQKFLHQRPIQNPFTNPFSSSPL) form a disordered region. At 1–41 (MAQQKFLHQRPIQNPFTNPFSSSPLSTSSISNRPISLLSRN) the chain is on the cytoplasmic side. Residues 14-25 (NPFTNPFSSSPL) show a composition bias toward low complexity. A helical; Signal-anchor for type II membrane protein transmembrane segment spans residues 42 to 62 (GLLLLLALLVILGVFLPWAGS). The Lumenal segment spans residues 63–360 (PLFPSPNKLS…ASESPLGKLE (298 aa)). Residues asparagine 93 and asparagine 168 are each glycosylated (N-linked (GlcNAc...) asparagine). The DXD motif signature appears at 191 to 193 (DVD). N-linked (GlcNAc...) asparagine glycans are attached at residues asparagine 285 and asparagine 310.

It belongs to the glycosyltransferase 77 family. Requires Mn(2+) as cofactor. Mg(2+) is required as a cofactor. In terms of tissue distribution, widely expressed.

Its subcellular location is the golgi apparatus membrane. In terms of biological role, catalyzes the transfer of D-xylose from UDP-alpha-D-xylose onto L-fucose. Probably involved in the biosynthesis of rhamnogalacturonan II (RG-II) through xylosylation of the internal fucose moiety of the A-chain of RG-II, a structurally complex pectic polysaccharide of the primary cell wall. RG-II is essential for the cell wall integrity of rapidly growing tissues such as roots and pollen tube growth and elongation. The protein is UDP-D-xylose:L-fucose alpha-1,3-D-xylosyltransferase MGP4 of Arabidopsis thaliana (Mouse-ear cress).